Consider the following 386-residue polypeptide: S-adenosylmethionine synthase (386 aa).

His-17 serves as a coordination point for ATP. Residue Asp-19 participates in Mg(2+) binding. Glu-45 lines the K(+) pocket. Glu-58 and Gln-101 together coordinate L-methionine. The segment at 101 to 111 is flexible loop; that stretch reads QSPDISQGVTE. Residues 168–170, Asp-242, 248–249, Ala-265, and Lys-269 contribute to the ATP site; these read DAK and RK. Asp-242 provides a ligand contact to L-methionine. Lys-273 is a binding site for L-methionine.

The protein belongs to the AdoMet synthase family. In terms of assembly, homotetramer; dimer of dimers. Mg(2+) serves as cofactor. The cofactor is K(+).

It is found in the cytoplasm. It catalyses the reaction L-methionine + ATP + H2O = S-adenosyl-L-methionine + phosphate + diphosphate. The protein operates within amino-acid biosynthesis; S-adenosyl-L-methionine biosynthesis; S-adenosyl-L-methionine from L-methionine: step 1/1. In terms of biological role, catalyzes the formation of S-adenosylmethionine (AdoMet) from methionine and ATP. The overall synthetic reaction is composed of two sequential steps, AdoMet formation and the subsequent tripolyphosphate hydrolysis which occurs prior to release of AdoMet from the enzyme. The sequence is that of S-adenosylmethionine synthase from Leptospira interrogans serogroup Icterohaemorrhagiae serovar copenhageni (strain Fiocruz L1-130).